A 362-amino-acid chain; its full sequence is Cap-specific mRNA (nucleoside-2'-O-)-methyltransferase 1 (362 aa).

Positions S87 to L294 constitute a RrmJ-type SAM-dependent 2'-O-MTase domain. G130 and D207 together coordinate S-adenosyl-L-methionine. K248 acts as the Proton acceptor in catalysis.

The protein resides in the nucleus. The enzyme catalyses a 5'-end (N(7)-methyl 5'-triphosphoguanosine)-ribonucleoside in mRNA + S-adenosyl-L-methionine = a 5'-end (N(7)-methyl 5'-triphosphoguanosine)-(2'-O-methyl-ribonucleoside) in mRNA + S-adenosyl-L-homocysteine + H(+). S-adenosyl-L-methionine-dependent methyltransferase that mediates RNA cap1 2'-O-ribose methylation to the 5'-cap structure of spliced leader and U1 small nuclear RNAs. Methylates the ribose of the first nucleotide of a m(7)GpppG-capped RNA to produce m(7)GpppNmp (cap1). Cap1 modification is linked to higher levels of translation. Recognizes a guanosine cap on RNA independent of its N(7) methylation status. The protein is Cap-specific mRNA (nucleoside-2'-O-)-methyltransferase 1 of Trypanosoma cruzi (strain CL Brener).